Consider the following 202-residue polypeptide: Xanthine phosphoribosyltransferase (202 aa).

Positions 20 and 27 each coordinate xanthine. 128 to 132 serves as a coordination point for 5-phospho-alpha-D-ribose 1-diphosphate; the sequence is ASGGT. A xanthine-binding site is contributed by lysine 156.

It belongs to the purine/pyrimidine phosphoribosyltransferase family. Xpt subfamily. Homodimer.

The protein localises to the cytoplasm. The enzyme catalyses XMP + diphosphate = xanthine + 5-phospho-alpha-D-ribose 1-diphosphate. It participates in purine metabolism; XMP biosynthesis via salvage pathway; XMP from xanthine: step 1/1. Converts the preformed base xanthine, a product of nucleic acid breakdown, to xanthosine 5'-monophosphate (XMP), so it can be reused for RNA or DNA synthesis. This is Xanthine phosphoribosyltransferase from Deinococcus geothermalis (strain DSM 11300 / CIP 105573 / AG-3a).